Reading from the N-terminus, the 112-residue chain is Ferredoxin, plant-type (112 aa).

The 2Fe-2S ferredoxin-type domain occupies 6-97 (YEVFEVLSGQ…DLTIEYFRHV (92 aa)). [2Fe-2S] cluster-binding residues include C41, C46, C49, and C81.

Belongs to the 2Fe2S plant-type ferredoxin family.

Its pathway is aromatic compound metabolism; catechol degradation. Functionally, ferredoxins are iron-sulfur proteins that transfer electrons in a wide variety of metabolic reactions. The polypeptide is Ferredoxin, plant-type (xylT) (Pseudomonas putida (Arthrobacter siderocapsulatus)).